The chain runs to 70 residues: Small ribosomal subunit protein bS21 (70 aa).

The protein belongs to the bacterial ribosomal protein bS21 family.

This is Small ribosomal subunit protein bS21 from Campylobacter curvus (strain 525.92).